A 1588-amino-acid chain; its full sequence is Paternally-expressed gene 3 protein (1588 aa).

An SCAN box domain is found at 46–128 (HQRFRNLIYV…TLLENYKEMY (83 aa)). Disordered stretches follow at residues 128 to 230 (YQPE…ESYQ), 266 to 306 (DGHS…RRGI), and 319 to 349 (KFIK…MSDD). The span at 129–142 (QPEDDNNSDVTSDD) shows a compositional bias: acidic residues. Basic and acidic residues-rich tracts occupy residues 143–152 (DMTRNRRESS), 161–182 (SGDR…DRWS), 206–225 (FEMD…RSQD), and 295–306 (PEAKKSTHRRGI). 3 consecutive C2H2-type zinc fingers follow at residues 454–476 (YVCD…QIMH), 507–529 (FECK…RKIH), and 565–587 (YECR…QKIH). The segment covering 588 to 607 (FGDDKDNEREHERERERGET) has biased composition (basic and acidic residues). The disordered stretch occupies residues 588 to 610 (FGDDKDNEREHERERERGETFRP). The C2H2-type 4 zinc-finger motif lies at 627 to 649 (YECKVCGETFLHSSSLKEHQKIH). The tract at residues 838–930 (LVASKPPRSH…EFSVPSSNVR (93 aa)) is disordered. Residues 868–881 (LNDKRQKIPARENP) show a composition bias toward basic and acidic residues. The segment at 969-991 (YECQECGECFAHSSDLTEHQKIH) adopts a C2H2-type 5 zinc-finger fold. The interval 1056 to 1104 (EKSHGEESQGENTDGEETHSEETHGQETIEDPVIQGSDMEDPQKDDPDD) is disordered. Over residues 1071-1082 (EETHSEETHGQE) the composition is skewed to basic and acidic residues. C2H2-type zinc fingers lie at residues 1107–1129 (YECE…QKVH), 1163–1185 (YECP…QRIH), 1225–1247 (IRCL…MRLH), 1282–1304 (FECA…VTVH), and 1332–1354 (YECK…KELH). The span at 1395–1415 (AEPEVEAAEPEVEAAEPEVEA) shows a compositional bias: acidic residues. The interval 1395–1495 (AEPEVEAAEP…GIEDPEEGED (101 aa)) is disordered. Tandem repeats lie at residues 1397–1403 (PEVEAAE), 1404–1410 (PEVEAAE), 1411–1417 (PEVEAAE), 1418–1422 (PNGEA), 1425–1429 (PDGEA), 1432–1436 (PIGEA), and 1439–1443 (PNGEA). The interval 1397 to 1417 (PEVEAAEPEVEAAEPEVEAAE) is 3 X 7 AA repeat of P-E-V-E-A-A-E. The interval 1418-1443 (PNGEAEGPDGEAAEPIGEAGQPNGEA) is 4 X 5 AA repeat of P-X-G-E-A. Composition is skewed to acidic residues over residues 1449–1466 (DADE…ERAE) and 1475–1495 (PEGD…EGED). 2 consecutive C2H2-type zinc fingers follow at residues 1505-1527 (YDCH…LKTH) and 1564-1586 (FKCD…QNTH).

The protein belongs to the krueppel C2H2-type zinc-finger protein family. In terms of assembly, homodimer. Interacts with SIAH1A and SIAH2. Interacts with TRAF2.

Its subcellular location is the nucleus. The protein resides in the cytoplasm. Functionally, induces apoptosis in cooperation with SIAH1A. Acts as a mediator between p53/TP53 and BAX in a neuronal death pathway that is activated by DNA damage. Acts synergistically with TRAF2 and inhibits TNF induced apoptosis through activation of NF-kappa-B. The polypeptide is Paternally-expressed gene 3 protein (PEG3) (Pan troglodytes (Chimpanzee)).